A 342-amino-acid chain; its full sequence is Periplasmic protein TorT (342 aa).

An N-terminal signal peptide occupies residues 1–18 (MRVLLFLLLSLFMLPAFS).

The protein belongs to the bacterial solute-binding protein 2 family.

It is found in the periplasm. In terms of biological role, upon binding a putative inducer it probably interacts with TorS and allows it to play a role in the induction of the torCAD operon for trimethylamine N-oxide reductase. The polypeptide is Periplasmic protein TorT (torT) (Escherichia coli (strain K12)).